The primary structure comprises 94 residues: Co-chaperonin GroES (94 aa).

This sequence belongs to the GroES chaperonin family. As to quaternary structure, heptamer of 7 subunits arranged in a ring. Interacts with the chaperonin GroEL.

The protein localises to the cytoplasm. Its function is as follows. Together with the chaperonin GroEL, plays an essential role in assisting protein folding. The GroEL-GroES system forms a nano-cage that allows encapsulation of the non-native substrate proteins and provides a physical environment optimized to promote and accelerate protein folding. GroES binds to the apical surface of the GroEL ring, thereby capping the opening of the GroEL channel. The polypeptide is Co-chaperonin GroES (Clostridium kluyveri (strain NBRC 12016)).